A 424-amino-acid polypeptide reads, in one-letter code: MASSNLIKQLQERGLVAQVTDEEALAERLAQGPIALYCGFDPTADSLHLGHLVPLLCLKRFQQAGHKPVALVGGATGLIGDPSFKAAERKLNTEETVQEWVDKIRKQVAPFLDFDCGENSAIAANNYDWFGNMNVLTFLRDIGKHFSVNQMINKEAVKQRLNREDEGMSITEFSYNLQQGYDWTCLNTHYYVELQIGGSDQRWNITSEIDLTRRLHQNHVLGLTVPLITKADGTKFGKTEGGAVWLDPKKTSPYKFYQFWINTADADVYRFLKFFTFMSIEEINALEEEDKNSGKAPRAQYVLAEQVTRLVHGEEGLQAAKRITECLFSGSLSALSEADFEQLAQDGVPMVEMEKGADLMQALVDSELQPSRGQARKTIASNAITINGEKQSDPEYFFKEEDRLFGRFTLLRRGKKNYCLICWK.

Position 37 (Tyr37) interacts with L-tyrosine. A 'HIGH' region motif is present at residues Pro42–His51. Lys144 carries the post-translational modification N6-acetyllysine. 2 residues coordinate L-tyrosine: Tyr175 and Gln179. The 'KMSKS' region motif lies at Lys235 to Thr239. Lys238 contacts ATP. Residues Ala357–Gly414 form the S4 RNA-binding domain.

Belongs to the class-I aminoacyl-tRNA synthetase family. TyrS type 1 subfamily. In terms of assembly, homodimer.

Its subcellular location is the cytoplasm. The catalysed reaction is tRNA(Tyr) + L-tyrosine + ATP = L-tyrosyl-tRNA(Tyr) + AMP + diphosphate + H(+). Functionally, catalyzes the attachment of tyrosine to tRNA(Tyr) in a two-step reaction: tyrosine is first activated by ATP to form Tyr-AMP and then transferred to the acceptor end of tRNA(Tyr). In Shigella boydii serotype 4 (strain Sb227), this protein is Tyrosine--tRNA ligase.